Here is a 142-residue protein sequence, read N- to C-terminus: Small ribosomal subunit protein uS12 (142 aa).

This sequence belongs to the universal ribosomal protein uS12 family. In terms of assembly, part of the 30S ribosomal subunit.

With S4 and S5 plays an important role in translational accuracy. Located at the interface of the 30S and 50S subunits. This chain is Small ribosomal subunit protein uS12, found in Archaeoglobus fulgidus (strain ATCC 49558 / DSM 4304 / JCM 9628 / NBRC 100126 / VC-16).